A 138-amino-acid chain; its full sequence is Small ribosomal subunit protein uS12 (138 aa).

Aspartate 89 is modified (3-methylthioaspartic acid). A disordered region spans residues 101-138 (ALDTAGTQNRNQGRSKYGTKRPKKGAATAAKGPVKGKK). Polar residues predominate over residues 105-114 (AGTQNRNQGR). Positions 125–138 (GAATAAKGPVKGKK) are enriched in low complexity.

This sequence belongs to the universal ribosomal protein uS12 family. In terms of assembly, part of the 30S ribosomal subunit. Contacts proteins S8 and S17. May interact with IF1 in the 30S initiation complex.

Functionally, with S4 and S5 plays an important role in translational accuracy. Its function is as follows. Interacts with and stabilizes bases of the 16S rRNA that are involved in tRNA selection in the A site and with the mRNA backbone. Located at the interface of the 30S and 50S subunits, it traverses the body of the 30S subunit contacting proteins on the other side and probably holding the rRNA structure together. The combined cluster of proteins S8, S12 and S17 appears to hold together the shoulder and platform of the 30S subunit. The protein is Small ribosomal subunit protein uS12 of Heliobacterium modesticaldum (strain ATCC 51547 / Ice1).